The following is a 715-amino-acid chain: DNA-directed RNA polymerase subunit beta' (715 aa).

Zn(2+)-binding residues include Cys-69, Cys-71, Cys-87, and Cys-90. The tract at residues 244–272 (APESQSEVIEAQGPVPQAEEEKQRDQSIQ) is disordered. Residues Asp-520, Asp-522, and Asp-524 each coordinate Mg(2+).

Belongs to the RNA polymerase beta' chain family. RpoC1 subfamily. As to quaternary structure, in plastids the minimal PEP RNA polymerase catalytic core is composed of four subunits: alpha, beta, beta', and beta''. When a (nuclear-encoded) sigma factor is associated with the core the holoenzyme is formed, which can initiate transcription. Mg(2+) is required as a cofactor. Zn(2+) serves as cofactor.

It localises to the plastid. The protein resides in the chloroplast. The catalysed reaction is RNA(n) + a ribonucleoside 5'-triphosphate = RNA(n+1) + diphosphate. Functionally, DNA-dependent RNA polymerase catalyzes the transcription of DNA into RNA using the four ribonucleoside triphosphates as substrates. The polypeptide is DNA-directed RNA polymerase subunit beta' (Zygnema circumcarinatum (Green alga)).